We begin with the raw amino-acid sequence, 155 residues long: 2-C-methyl-D-erythritol 2,4-cyclodiphosphate synthase (155 aa).

A divalent metal cation-binding residues include Asp-9 and His-11. Residues 9–11 (DSH) and 35–36 (HS) contribute to the 4-CDP-2-C-methyl-D-erythritol 2-phosphate site. His-43 is a binding site for a divalent metal cation. 57–59 (DIG) lines the 4-CDP-2-C-methyl-D-erythritol 2-phosphate pocket.

The protein belongs to the IspF family. In terms of assembly, homotrimer. The cofactor is a divalent metal cation.

It carries out the reaction 4-CDP-2-C-methyl-D-erythritol 2-phosphate = 2-C-methyl-D-erythritol 2,4-cyclic diphosphate + CMP. The protein operates within isoprenoid biosynthesis; isopentenyl diphosphate biosynthesis via DXP pathway; isopentenyl diphosphate from 1-deoxy-D-xylulose 5-phosphate: step 4/6. Its function is as follows. Involved in the biosynthesis of isopentenyl diphosphate (IPP) and dimethylallyl diphosphate (DMAPP), two major building blocks of isoprenoid compounds. Catalyzes the conversion of 4-diphosphocytidyl-2-C-methyl-D-erythritol 2-phosphate (CDP-ME2P) to 2-C-methyl-D-erythritol 2,4-cyclodiphosphate (ME-CPP) with a corresponding release of cytidine 5-monophosphate (CMP). The chain is 2-C-methyl-D-erythritol 2,4-cyclodiphosphate synthase from Koribacter versatilis (strain Ellin345).